The primary structure comprises 374 residues: Peptide chain release factor 2 (374 aa).

The residue at position 252 (Gln-252) is an N5-methylglutamine.

It belongs to the prokaryotic/mitochondrial release factor family. Post-translationally, methylated by PrmC. Methylation increases the termination efficiency of RF2.

The protein resides in the cytoplasm. Its function is as follows. Peptide chain release factor 2 directs the termination of translation in response to the peptide chain termination codons UGA and UAA. The protein is Peptide chain release factor 2 of Stenotrophomonas maltophilia (strain R551-3).